A 331-amino-acid chain; its full sequence is Outer membrane lipoprotein PM1514 (331 aa).

An N-terminal signal peptide occupies residues M1–A20. The N-palmitoyl cysteine moiety is linked to residue C21. C21 carries S-diacylglycerol cysteine lipidation.

It is found in the cell outer membrane. Its subcellular location is the cell surface. In Pasteurella multocida (strain Pm70), this protein is Outer membrane lipoprotein PM1514.